We begin with the raw amino-acid sequence, 397 residues long: Subtilisin-like protease 3 (397 aa).

An N-terminal signal peptide occupies residues 1-19; that stretch reads MGCIKVISVFLAAVAAVDA. Residues 20 to 116 constitute a propeptide that is removed on maturation; sequence RAFFHNRGGN…VEHDRVVKLA (97 aa). The 82-residue stretch at 35–116 folds into the Inhibitor I9 domain; that stretch reads SYIVVMKDGV…VEHDRVVKLA (82 aa). The Peptidase S8 domain occupies 126–397; the sequence is TWGLGRVSHK…NKLLYNGSGR (272 aa). Catalysis depends on charge relay system residues Asp-158 and His-189. N-linked (GlcNAc...) asparagine glycosylation is present at Asn-250. Ser-344 functions as the Charge relay system in the catalytic mechanism. Residue Asn-393 is glycosylated (N-linked (GlcNAc...) asparagine).

It belongs to the peptidase S8 family.

Its subcellular location is the secreted. Its function is as follows. Secreted subtilisin-like serine protease with keratinolytic activity that contributes to pathogenicity. The sequence is that of Subtilisin-like protease 3 (SUB3) from Arthroderma otae (strain ATCC MYA-4605 / CBS 113480) (Microsporum canis).